We begin with the raw amino-acid sequence, 419 residues long: Ribosome biogenesis protein WDR12 homolog (419 aa).

The interval valine 10–glutamate 91 is ubiquitin-like (UBL) domain. WD repeat units lie at residues leucine 103 to isoleucine 140, glycine 142 to glutamate 184, glycine 191 to serine 230, glycine 249 to glutamate 287, serine 289 to valine 328, glycine 334 to tyrosine 374, and glycine 378 to methionine 416.

It belongs to the WD repeat WDR12/YTM1 family.

It localises to the nucleus. Its subcellular location is the nucleolus. It is found in the nucleoplasm. Its function is as follows. Required for maturation of ribosomal RNAs and formation of the large ribosomal subunit. This is Ribosome biogenesis protein WDR12 homolog from Drosophila mojavensis (Fruit fly).